Consider the following 119-residue polypeptide: Large ribosomal subunit protein uL18 (119 aa).

This sequence belongs to the universal ribosomal protein uL18 family. As to quaternary structure, part of the 50S ribosomal subunit; part of the 5S rRNA/L5/L18/L25 subcomplex. Contacts the 5S and 23S rRNAs.

Functionally, this is one of the proteins that bind and probably mediate the attachment of the 5S RNA into the large ribosomal subunit, where it forms part of the central protuberance. In Desulfovibrio desulfuricans (strain ATCC 27774 / DSM 6949 / MB), this protein is Large ribosomal subunit protein uL18.